Here is a 54-residue protein sequence, read N- to C-terminus: MAGKRDKIRLISSADTGHFYTTDKNKKNTPGKLEFKKYDPRVRRHVIYKEGKIK.

The protein belongs to the bacterial ribosomal protein bL33 family.

The sequence is that of Large ribosomal subunit protein bL33 from Xylella fastidiosa (strain M23).